We begin with the raw amino-acid sequence, 125 residues long: MFGDMIELFKPKKELPAVRKCSVINGDVKTFGKAYNDIKLAGKGSKLLKQTSDFSDESSRSDSSSVTNENEVSKAANTRLLHLPMPVNKIKAIALEHELLIKMREIFSEAAKLLESYVALRASVN.

Positions 50-73 are disordered; sequence QTSDFSDESSRSDSSSVTNENEVS.

This is an uncharacterized protein from Microplitis demolitor (Parasitoid wasp).